Here is a 667-residue protein sequence, read N- to C-terminus: Leucine-rich repeat-containing protein 43 (667 aa).

A compositionally biased stretch (polar residues) spans methionine 1 to tyrosine 11. A disordered region spans residues methionine 1–threonine 24. 4 LRR repeats span residues lysine 148–proline 169, threonine 170–proline 191, arginine 194–tyrosine 213, and glutamine 221–leucine 242. One can recognise an LRRCT domain in the interval asparagine 256–leucine 294. Disordered stretches follow at residues phenylalanine 374 to methionine 407, glutamate 533 to proline 570, and serine 616 to glutamine 640. A compositionally biased stretch (acidic residues) spans threonine 377 to proline 386. The span at arginine 390–phenylalanine 399 shows a compositional bias: basic residues. Residues lysine 540–aspartate 553 show a composition bias toward basic and acidic residues. The span at lysine 617–arginine 627 shows a compositional bias: basic residues.

The polypeptide is Leucine-rich repeat-containing protein 43 (Lrrc43) (Mus musculus (Mouse)).